The primary structure comprises 178 residues: Major urinary protein 4 (178 aa).

Residues 1–16 form the signal peptide; it reads MKLLLCLGLTLVCIHA. Cysteine 80 and cysteine 173 are joined by a disulfide.

The protein belongs to the calycin superfamily. Lipocalin family. As to expression, expressed in lacrimal gland, parotid gland, sublingual gland, nasal mucus, and vomeronasal organ.

It localises to the secreted. Functionally, binds pheromones, likely to displace pheromones complexed to urinary MUPs and transport them to the vomeronasal organ (VNO) where they associate with their neuronal receptor(s). MUP4 is highly specific for the male mouse pheromone 2-sec-butyl-4,5-dihydrothiazole (SBT). In Mus musculus (Mouse), this protein is Major urinary protein 4 (Mup4).